The following is a 60-amino-acid chain: Sperm protamine P1 (60 aa).

A disordered region spans residues Met-1–Tyr-60.

The protein belongs to the protamine P1 family. In terms of tissue distribution, testis.

It is found in the nucleus. It localises to the chromosome. Its function is as follows. Protamines substitute for histones in the chromatin of sperm during the haploid phase of spermatogenesis. They compact sperm DNA into a highly condensed, stable and inactive complex. This chain is Sperm protamine P1 (PRM1), found in Osphranter rufus (Red kangaroo).